The chain runs to 214 residues: Octanoyltransferase (214 aa).

Positions 35–211 (KSNIDFIWLG…IIQEEFYFNF (177 aa)) constitute a BPL/LPL catalytic domain. Substrate contacts are provided by residues 75–82 (RGGEVTCH), 142–144 (SIG), and 155–157 (GFS). The active-site Acyl-thioester intermediate is cysteine 173.

Belongs to the LipB family.

It localises to the cytoplasm. The catalysed reaction is octanoyl-[ACP] + L-lysyl-[protein] = N(6)-octanoyl-L-lysyl-[protein] + holo-[ACP] + H(+). It participates in protein modification; protein lipoylation via endogenous pathway; protein N(6)-(lipoyl)lysine from octanoyl-[acyl-carrier-protein]: step 1/2. In terms of biological role, catalyzes the transfer of endogenously produced octanoic acid from octanoyl-acyl-carrier-protein onto the lipoyl domains of lipoate-dependent enzymes. Lipoyl-ACP can also act as a substrate although octanoyl-ACP is likely to be the physiological substrate. The sequence is that of Octanoyltransferase from Prochlorococcus marinus (strain MIT 9515).